Consider the following 887-residue polypeptide: Translation initiation factor IF-2 (887 aa).

Residues 1-259 (MSDEQDQGET…KVGDDRRRGA (259 aa)) are disordered. Residues 62 to 94 (GRPSAPSRASGGAAAPRGLTAAEQAARQRAVVE) are compositionally biased toward low complexity. 2 stretches are compositionally biased toward basic and acidic residues: residues 95–111 (QQREAARLEAERREQEK) and 119–158 (EEARRKAEEEARAAEEAERLRAEEEARRREEEEAERRRAA). Positions 159–210 (EASQATAAPPAPAAAASPRAAMPAPTAAPARPGAAPARRTAPVPPATSASET) are enriched in low complexity. A compositionally biased stretch (basic and acidic residues) spans 250–259 (KVGDDRRRGA). Positions 386 to 556 (VRPPVVTIMG…LLQAELLDLK (171 aa)) constitute a tr-type G domain. Residues 395–402 (GHVDHGKT) are G1. A GTP-binding site is contributed by 395–402 (GHVDHGKT). Residues 420–424 (GITQH) form a G2 region. The tract at residues 442-445 (DTPG) is G3. GTP contacts are provided by residues 442-446 (DTPGH) and 496-499 (NKID). The segment at 496-499 (NKID) is G4. Residues 532–534 (SAL) form a G5 region.

Belongs to the TRAFAC class translation factor GTPase superfamily. Classic translation factor GTPase family. IF-2 subfamily.

The protein resides in the cytoplasm. Functionally, one of the essential components for the initiation of protein synthesis. Protects formylmethionyl-tRNA from spontaneous hydrolysis and promotes its binding to the 30S ribosomal subunits. Also involved in the hydrolysis of GTP during the formation of the 70S ribosomal complex. This is Translation initiation factor IF-2 from Acidiphilium cryptum (strain JF-5).